Here is a 356-residue protein sequence, read N- to C-terminus: Nicotinate-nucleotide--dimethylbenzimidazole phosphoribosyltransferase (356 aa).

E317 serves as the catalytic Proton acceptor.

This sequence belongs to the CobT family. As to quaternary structure, homodimer.

The enzyme catalyses 5,6-dimethylbenzimidazole + nicotinate beta-D-ribonucleotide = alpha-ribazole 5'-phosphate + nicotinate + H(+). It participates in nucleoside biosynthesis; alpha-ribazole biosynthesis; alpha-ribazole from 5,6-dimethylbenzimidazole: step 1/2. Catalyzes the synthesis of alpha-ribazole-5'-phosphate from nicotinate mononucleotide (NAMN) and 5,6-dimethylbenzimidazole (DMB). This chain is Nicotinate-nucleotide--dimethylbenzimidazole phosphoribosyltransferase, found in Salmonella paratyphi C (strain RKS4594).